The following is a 379-amino-acid chain: Arginine biosynthesis bifunctional protein ArgJ (379 aa).

Substrate-binding residues include threonine 141, lysine 163, threonine 174, glutamate 252, asparagine 374, and threonine 379. Residue threonine 174 is the Nucleophile of the active site.

Belongs to the ArgJ family. As to quaternary structure, heterotetramer of two alpha and two beta chains.

It localises to the cytoplasm. The catalysed reaction is N(2)-acetyl-L-ornithine + L-glutamate = N-acetyl-L-glutamate + L-ornithine. It carries out the reaction L-glutamate + acetyl-CoA = N-acetyl-L-glutamate + CoA + H(+). It participates in amino-acid biosynthesis; L-arginine biosynthesis; L-ornithine and N-acetyl-L-glutamate from L-glutamate and N(2)-acetyl-L-ornithine (cyclic): step 1/1. The protein operates within amino-acid biosynthesis; L-arginine biosynthesis; N(2)-acetyl-L-ornithine from L-glutamate: step 1/4. In terms of biological role, catalyzes two activities which are involved in the cyclic version of arginine biosynthesis: the synthesis of N-acetylglutamate from glutamate and acetyl-CoA as the acetyl donor, and of ornithine by transacetylation between N(2)-acetylornithine and glutamate. The chain is Arginine biosynthesis bifunctional protein ArgJ from Aquifex aeolicus (strain VF5).